A 322-amino-acid polypeptide reads, in one-letter code: ATP-dependent 6-phosphofructokinase 1 (322 aa).

Position 11 (glycine 11) interacts with ATP. Residue 21-25 (RAVVR) participates in ADP binding. ATP is bound by residues 72–73 (RS) and 102–105 (GDGT). Aspartate 103 lines the Mg(2+) pocket. 126 to 128 (TID) is a binding site for substrate. Aspartate 128 (proton acceptor) is an active-site residue. Position 155 (arginine 155) interacts with ADP. Residues arginine 163 and 170–172 (MGR) contribute to the substrate site. ADP-binding positions include 186-188 (GAE), arginine 212, and 214-216 (KKS). Residues glutamate 223, arginine 246, and 252–255 (HIQR) contribute to the substrate site.

Belongs to the phosphofructokinase type A (PFKA) family. ATP-dependent PFK group I subfamily. Prokaryotic clade 'B1' sub-subfamily. Homotetramer. It depends on Mg(2+) as a cofactor.

It localises to the cytoplasm. It catalyses the reaction beta-D-fructose 6-phosphate + ATP = beta-D-fructose 1,6-bisphosphate + ADP + H(+). It functions in the pathway carbohydrate degradation; glycolysis; D-glyceraldehyde 3-phosphate and glycerone phosphate from D-glucose: step 3/4. Its activity is regulated as follows. Allosterically activated by ADP and other diphosphonucleosides. Allosterically inhibited by phosphoenolpyruvate which induces the dissociation of the active tetramer into an inactive two-subunit forms. Functionally, catalyzes the phosphorylation of D-fructose 6-phosphate to fructose 1,6-bisphosphate by ATP, the first committing step of glycolysis. This chain is ATP-dependent 6-phosphofructokinase 1, found in Thermus thermophilus (strain ATCC 27634 / DSM 579 / HB8).